The chain runs to 183 residues: ADP-ribosylation factor-like protein 1 (183 aa).

The N-myristoyl glycine moiety is linked to residue Gly2. Residues 25 to 32, 68 to 72, and 127 to 130 contribute to the GTP site; these read GLDGAGKT, DLGGQ, and NKQD.

It belongs to the small GTPase superfamily. Arf family. Homodimer. Interacts with IMH1 (via GRIP domain); the interaction is dependent on GTP. Interacts with MON2.

The protein localises to the golgi apparatus. Functionally, recruits golgins such as IMH1 to the Golgi. Can bind and hydrolyze GTP. May be involved in trafficking events within the endosomal system. This Saccharomyces cerevisiae (strain ATCC 204508 / S288c) (Baker's yeast) protein is ADP-ribosylation factor-like protein 1 (ARL1).